The primary structure comprises 254 residues: NH(3)-dependent NAD(+) synthetase (254 aa).

ATP is bound at residue 32–39; that stretch reads GISGGIDS. Position 38 (Asp-38) interacts with Mg(2+). Arg-113 provides a ligand contact to deamido-NAD(+). Residue Thr-133 participates in ATP binding. Residue Glu-138 coordinates Mg(2+). Deamido-NAD(+)-binding residues include Lys-146 and Asp-153. ATP is bound by residues Lys-162 and Thr-184. 244 to 245 is a deamido-NAD(+) binding site; that stretch reads HK.

This sequence belongs to the NAD synthetase family. As to quaternary structure, homodimer.

The enzyme catalyses deamido-NAD(+) + NH4(+) + ATP = AMP + diphosphate + NAD(+) + H(+). Its pathway is cofactor biosynthesis; NAD(+) biosynthesis; NAD(+) from deamido-NAD(+) (ammonia route): step 1/1. In terms of biological role, catalyzes the ATP-dependent amidation of deamido-NAD to form NAD. Uses ammonia as a nitrogen source. This chain is NH(3)-dependent NAD(+) synthetase, found in Thermococcus kodakarensis (strain ATCC BAA-918 / JCM 12380 / KOD1) (Pyrococcus kodakaraensis (strain KOD1)).